We begin with the raw amino-acid sequence, 560 residues long: Calcium-binding and coiled-coil domain-containing protein 1-A (560 aa).

Coiled coils occupy residues 156–192 and 367–480; these read KATF…EKRI and WWQE…DKML. Residues 480–517 are disordered; the sequence is LMEDKTDSSPPTLSVDLSDSDDESPGDEGVSQQLGPCS. Low complexity predominate over residues 487–496; that stretch reads SSPPTLSVDL.

It belongs to the CALCOCO family.

The protein resides in the cytoplasm. It is found in the nucleus. Functionally, may function as a coactivator for aryl hydrocarbon and nuclear receptors. The protein is Calcium-binding and coiled-coil domain-containing protein 1-A (calcoco1-a) of Xenopus laevis (African clawed frog).